Consider the following 720-residue polypeptide: Exocyst complex component 7 (720 aa).

Coiled coils occupy residues 5–34 and 63–83; these read EDAS…SLEK and VHKQ…TLSN. Ser-133 carries the phosphoserine modification. The disordered stretch occupies residues 249–268; that stretch reads SPAVQTKRKETPTKKAPKRP.

It belongs to the EXO70 family.

Its subcellular location is the cytoplasm. It is found in the cytosol. The protein resides in the cell membrane. It localises to the midbody. The protein localises to the midbody ring. Functionally, component of the exocyst complex involved in the docking of exocytic vesicles with fusion sites on the plasma membrane. It is required for neuron survival and plays an essential role in telencephalon development. This Danio rerio (Zebrafish) protein is Exocyst complex component 7 (exoc7).